The primary structure comprises 668 residues: Ras guanine nucleotide exchange factor D (668 aa).

One can recognise a Rho-GAP domain in the interval 27 to 224 (KKLESIFGIA…LMVMDIDEFD (198 aa)). The N-terminal Ras-GEF domain occupies 237–362 (GESIVKAATF…YFQTFFKPVI (126 aa)). Positions 433–663 (GSNIIAQQIT…HSISHKLEPR (231 aa)) constitute a Ras-GEF domain.

In terms of biological role, promotes the exchange of Ras-bound GDP by GTP. The sequence is that of Ras guanine nucleotide exchange factor D (gefD) from Dictyostelium discoideum (Social amoeba).